A 281-amino-acid polypeptide reads, in one-letter code: Secretory carrier-associated membrane protein 5 (281 aa).

The disordered stretch occupies residues 1 to 49 (MHHDPNPFDEGADDNPFSNGGGGGARRGGGGGGGGGGGGGKSQFSFGFG). Topologically, residues 1-139 (MHHDPNPFDE…AQKLQYLAFA (139 aa)) are cytoplasmic. A compositionally biased stretch (gly residues) spans 19–49 (NGGGGGARRGGGGGGGGGGGGGKSQFSFGFG). Residues 76–102 (KELLQWEADLKRREADIRRREEALKSA) adopt a coiled-coil conformation. 4 consecutive transmembrane segments (helical) span residues 140–160 (SWLG…VCWI), 167–187 (LFFL…LMWY), 202–222 (FGWF…AAIA), and 250–270 (IFYF…IWVL). Residues 271 to 281 (QKVYMYFRGHK) lie on the Cytoplasmic side of the membrane.

The protein belongs to the SCAMP family.

It localises to the cell membrane. The protein resides in the cytoplasmic vesicle. Its subcellular location is the secretory vesicle membrane. Probably involved in membrane trafficking. The polypeptide is Secretory carrier-associated membrane protein 5 (SCAMP5) (Oryza sativa subsp. japonica (Rice)).